The chain runs to 262 residues: Shikimate dehydrogenase (NADP(+)) (262 aa).

Shikimate is bound by residues serine 15–serine 17 and threonine 62. The active-site Proton acceptor is lysine 66. Position 78 (glutamate 78) interacts with NADP(+). Shikimate is bound by residues asparagine 87 and aspartate 102. Residues glycine 126–alanine 130, asparagine 150–arginine 155, and methionine 214 each bind NADP(+). Tyrosine 216 contacts shikimate. Glycine 236 serves as a coordination point for NADP(+).

Belongs to the shikimate dehydrogenase family. As to quaternary structure, homodimer.

It carries out the reaction shikimate + NADP(+) = 3-dehydroshikimate + NADPH + H(+). It participates in metabolic intermediate biosynthesis; chorismate biosynthesis; chorismate from D-erythrose 4-phosphate and phosphoenolpyruvate: step 4/7. Involved in the biosynthesis of the chorismate, which leads to the biosynthesis of aromatic amino acids. Catalyzes the reversible NADPH linked reduction of 3-dehydroshikimate (DHSA) to yield shikimate (SA). This chain is Shikimate dehydrogenase (NADP(+)), found in Acinetobacter baumannii (strain AB307-0294).